Here is a 641-residue protein sequence, read N- to C-terminus: Fibrinogen alpha-2 chain (641 aa).

An N-terminal signal peptide occupies residues Met-1–Gly-23. Positions Ser-107–Arg-226 form a coiled coil. Residues Asp-228–Lys-327 form a disordered region. Asn-271 carries an N-linked (GlcNAc...) asparagine glycan. Residues Val-279 to Val-289 show a composition bias toward basic and acidic residues. Over residues Ser-293–Thr-317 the composition is skewed to low complexity. The Fibrinogen C-terminal domain occupies Arg-395–Gln-636. N-linked (GlcNAc...) asparagine glycosylation occurs at Asn-397. Cys-404 and Cys-435 are oxidised to a cystine. Asn-458 is a glycosylation site (N-linked (GlcNAc...) asparagine). A disulfide bridge links Cys-571 with Cys-584.

As to quaternary structure, heterohexamer; disulfide linked. Contains 2 sets of 3 non-identical chains (alpha, beta and gamma). The 2 heterotrimers are in head to head conformation with the N-termini in a small central domain. Conversion of fibrinogen to fibrin is triggered by thrombin, which cleaves fibrinopeptides A and B from alpha and beta chains, and thus exposes the N-terminal polymerization sites responsible for the formation of the soft clot. The soft clot is converted into the hard clot by factor XIIIA which catalyzes the epsilon-(gamma-glutamyl)lysine cross-linking between gamma chains (stronger) and between alpha chains (weaker) of different monomers. In terms of processing, forms F13A-mediated cross-links between a glutamine and the epsilon-amino group of a lysine residue, forming fibronectin-fibrinogen heteropolymers.

Its subcellular location is the secreted. In terms of biological role, fibrinogen has a double function: yielding monomers that polymerize into fibrin and acting as a cofactor in platelet aggregation. The chain is Fibrinogen alpha-2 chain from Petromyzon marinus (Sea lamprey).